We begin with the raw amino-acid sequence, 474 residues long: 3-isopropylmalate dehydratase large subunit (474 aa).

The segment at 293-313 (GTTPGQGIGITEEIPAPEDLP) is disordered. The [4Fe-4S] cluster site is built by Cys348, Cys408, and Cys411.

It belongs to the aconitase/IPM isomerase family. LeuC type 1 subfamily. Heterodimer of LeuC and LeuD. The cofactor is [4Fe-4S] cluster.

The enzyme catalyses (2R,3S)-3-isopropylmalate = (2S)-2-isopropylmalate. Its pathway is amino-acid biosynthesis; L-leucine biosynthesis; L-leucine from 3-methyl-2-oxobutanoate: step 2/4. Its function is as follows. Catalyzes the isomerization between 2-isopropylmalate and 3-isopropylmalate, via the formation of 2-isopropylmaleate. This Natronomonas pharaonis (strain ATCC 35678 / DSM 2160 / CIP 103997 / JCM 8858 / NBRC 14720 / NCIMB 2260 / Gabara) (Halobacterium pharaonis) protein is 3-isopropylmalate dehydratase large subunit.